Here is a 471-residue protein sequence, read N- to C-terminus: 1,3-beta-glucanosyltransferase GAS4 (471 aa).

Positions Met-1–Ala-21 are cleaved as a signal peptide. Cys-70 and Cys-99 are oxidised to a cystine. (1,3-beta-D-glucosyl)n is bound at residue Tyr-88. The N-linked (GlcNAc...) asparagine glycan is linked to Asn-151. Asn-160, Glu-161, Asp-203, and Arg-208 together coordinate (1,3-beta-D-glucosyl)n. Residue Glu-161 is the Proton donor of the active site. Cystine bridges form between Cys-217/Cys-354 and Cys-238/Cys-269. Glu-266 (nucleophile) is an active-site residue. Tyr-298 lines the (1,3-beta-D-glucosyl)n pocket. Asn-398 is a glycosylation site (N-linked (GlcNAc...) asparagine). Asn-447 carries the GPI-anchor amidated asparagine lipid modification. Positions Ser-448–Phe-471 are cleaved as a propeptide — removed in mature form.

Belongs to the glycosyl hydrolase 72 family.

It localises to the cell membrane. In terms of biological role, splits internally a 1,3-beta-glucan molecule and transfers the newly generated reducing end (the donor) to the non-reducing end of another 1,3-beta-glucan molecule (the acceptor) forming a 1,3-beta linkage, resulting in the elongation of 1,3-beta-glucan chains in the cell wall. Involved in spore wall assembly. The protein is 1,3-beta-glucanosyltransferase GAS4 (GAS4) of Saccharomyces cerevisiae (strain ATCC 204508 / S288c) (Baker's yeast).